Reading from the N-terminus, the 164-residue chain is Pheromone-binding protein (164 aa).

Residues 1–22 form the signal peptide; that stretch reads MSIQGQIALALMVNMAVGSVDA. 3 cysteine pairs are disulfide-bonded: cysteine 41-cysteine 76, cysteine 72-cysteine 130, and cysteine 119-cysteine 139.

It belongs to the PBP/GOBP family. In terms of assembly, homodimer. In terms of tissue distribution, antenna.

This major soluble protein in olfactory sensilla of male moths serves to solubilize the extremely hydrophobic pheromone molecules such as bombykol and to transport pheromone through the aqueous lymph to receptors located on olfactory cilia. The sequence is that of Pheromone-binding protein from Bombyx mori (Silk moth).